We begin with the raw amino-acid sequence, 670 residues long: Solute carrier organic anion transporter family member 1A4 (670 aa).

The Cytoplasmic portion of the chain corresponds to 1–20; it reads MGKSEKEVATHGVRCFSKIK. A helical membrane pass occupies residues 21–40; it reads AFLLALTCAYVSKSLSGTYM. Residues 41–59 lie on the Extracellular side of the membrane; the sequence is NSMLTQIERQFGIPTSVVG. Residues 60–80 traverse the membrane as a helical segment; sequence LINGSFEIGNLLLIIFVSYFG. The Cytoplasmic portion of the chain corresponds to 81–86; the sequence is TKLHRP. The chain crosses the membrane as a helical span at residues 87–111; sequence IMIGVGCAVMGLGCFLISIPHFLMG. Over 112 to 155 the chain is Extracellular; it reads RYEYETTILPTSNLSSNSFVCTENRTQTLKPTQDPTECVKEMKS. Residues Asn-124 and Asn-135 are each glycosylated (N-linked (GlcNAc...) asparagine). Residues 156 to 184 form a helical membrane-spanning segment; that stretch reads LMWIYVLVGNIIRGMGETPIMPLGISYIE. The Cytoplasmic segment spans residues 185–203; the sequence is DFAKSENSPLYIGILETGM. The chain crosses the membrane as a helical span at residues 204–224; the sequence is TIGPLIGLLLGSSCANIYVDT. The Extracellular segment spans residues 225 to 242; sequence GSVNTDDLTITPTDTRWV. The helical transmembrane segment at 243–267 threads the bilayer; sequence GAWWIGFLVCAGVNILTSIPFFFFP. Topologically, residues 268–311 are cytoplasmic; sequence KTLLKEGLQDNGDGTENAKEEKHREKIKEENRGITKDFFLFMKS. A helical membrane pass occupies residues 312–333; sequence LSCNPIYMIFILISVIQVNAFI. At 334–353 the chain is on the extracellular side; sequence NSFTFMPKYLEQQYGKSTAE. Residues 354 to 377 traverse the membrane as a helical segment; the sequence is IVFLMGLYMLPPICLGYLIGGLIM. At 378-381 the chain is on the cytoplasmic side; the sequence is KKFK. The helical transmembrane segment at 382 to 405 threads the bilayer; sequence ITVKKAAYIGFWLSLTEYLLSFVS. Residues 406-513 lie on the Extracellular side of the membrane; sequence YIMTCDNFPV…PECANKLQYF (108 aa). The 56-residue stretch at 433–488 folds into the Kazal-like domain; it reads NNVLADCNTKCSCLTNTWDPVCGDNGLSYMSACLAGCEKSVGTGTNMVFQNCSCIQ. Cystine bridges form between Cys-439/Cys-469, Cys-445/Cys-465, and Cys-454/Cys-486. Asn-483 and Asn-492 each carry an N-linked (GlcNAc...) asparagine glycan. A helical membrane pass occupies residues 514-536; it reads LIISIIGCFIFSLGAIPGYMVLL. Topologically, residues 537-545 are cytoplasmic; it reads RCMKSEEKS. The helical transmembrane segment at 546 to 571 threads the bilayer; sequence LGVGLHTFCMRILGGIPAPIYFGALI. At 572 to 605 the chain is on the extracellular side; the sequence is DRTCLHWGTLKCGEPGACRMYDINSFRRIYLGLP. The helical transmembrane segment at 606 to 623 threads the bilayer; it reads AALRGASFLPALFILILM. Residues 624–670 lie on the Cytoplasmic side of the membrane; sequence RKFQFPGDIDSSDTDPAEMKLTAKESKCTNVHRSPTMQNDGERKTKL. Phosphoserine is present on residues Ser-634 and Ser-635. Residues 649-670 are disordered; sequence SKCTNVHRSPTMQNDGERKTKL. The span at 651 to 662 shows a compositional bias: polar residues; the sequence is CTNVHRSPTMQN.

The protein belongs to the organo anion transporter (TC 2.A.60) family. In terms of tissue distribution, highly expressed in brain and liver. Detected at very low levels in heart and lung.

The protein resides in the cell membrane. It catalyses the reaction estrone 3-sulfate(out) = estrone 3-sulfate(in). The enzyme catalyses taurocholate(out) = taurocholate(in). It carries out the reaction prostaglandin E2(out) = prostaglandin E2(in). The catalysed reaction is L-thyroxine(out) = L-thyroxine(in). Its function is as follows. Mediates the Na(+)-independent transport of organic anions such as taurocholate, cholate, 17-beta-glucuronosyl estradiol, prostaglandin E2, estrone 3-sulfate, L-thyroxine (T4), the cardiac glycosides ouabain and digoxin and thyroid hormones. Shows a pH-sensitive substrate specificity which may be ascribed to the protonation state of the binding site and leads to a stimulation of substrate transport in an acidic microenvironment. Hydrogencarbonate/HCO3(-) acts as the probable counteranion that exchanges for organic anions. The sequence is that of Solute carrier organic anion transporter family member 1A4 (Slco1a4) from Mus musculus (Mouse).